Consider the following 203-residue polypeptide: MKKLLVACCLLSGLISAHALADASSDLQARLGKVNSFHANFSQKVTSSEGTAVQEGEGELWVKRPNLFNWHMTSPDESVLISDGETLWFYNPFVEQATATWLKNATGNTPFMLITRNNPDDWKQYNVKQKGDDFELTPKSASGNLKQFAITVTPTGTIKSFTAVEQDGQRSAYTLKGQQNSSADASKFKFTLPKGVTLDDQRQ.

The signal sequence occupies residues 1-21 (MKKLLVACCLLSGLISAHALA).

It belongs to the LolA family. As to quaternary structure, monomer.

The protein resides in the periplasm. Participates in the translocation of lipoproteins from the inner membrane to the outer membrane. Only forms a complex with a lipoprotein if the residue after the N-terminal Cys is not an aspartate (The Asp acts as a targeting signal to indicate that the lipoprotein should stay in the inner membrane). The chain is Outer-membrane lipoprotein carrier protein from Yersinia enterocolitica serotype O:8 / biotype 1B (strain NCTC 13174 / 8081).